A 417-amino-acid polypeptide reads, in one-letter code: Serine hydroxymethyltransferase (417 aa).

(6S)-5,6,7,8-tetrahydrofolate contacts are provided by residues Leu-121 and 125–127 (GHL). Residue Lys-229 is modified to N6-(pyridoxal phosphate)lysine. 355–357 (SPF) provides a ligand contact to (6S)-5,6,7,8-tetrahydrofolate.

It belongs to the SHMT family. As to quaternary structure, homodimer. Pyridoxal 5'-phosphate is required as a cofactor.

Its subcellular location is the cytoplasm. It carries out the reaction (6R)-5,10-methylene-5,6,7,8-tetrahydrofolate + glycine + H2O = (6S)-5,6,7,8-tetrahydrofolate + L-serine. The protein operates within one-carbon metabolism; tetrahydrofolate interconversion. Its pathway is amino-acid biosynthesis; glycine biosynthesis; glycine from L-serine: step 1/1. Catalyzes the reversible interconversion of serine and glycine with tetrahydrofolate (THF) serving as the one-carbon carrier. This reaction serves as the major source of one-carbon groups required for the biosynthesis of purines, thymidylate, methionine, and other important biomolecules. Also exhibits THF-independent aldolase activity toward beta-hydroxyamino acids, producing glycine and aldehydes, via a retro-aldol mechanism. The sequence is that of Serine hydroxymethyltransferase from Salmonella choleraesuis (strain SC-B67).